A 95-amino-acid polypeptide reads, in one-letter code: MSVTKQDVEYIATLARLSFSEDEKEKMTKELNTILHYVEKLNELDTEEVEALNNMNERHNVLRPDEIVASIENSKAIKNAPDSVERFFKVPKVIG.

This sequence belongs to the GatC family. As to quaternary structure, heterotrimer of A, B and C subunits.

It carries out the reaction L-glutamyl-tRNA(Gln) + L-glutamine + ATP + H2O = L-glutaminyl-tRNA(Gln) + L-glutamate + ADP + phosphate + H(+). The enzyme catalyses L-aspartyl-tRNA(Asn) + L-glutamine + ATP + H2O = L-asparaginyl-tRNA(Asn) + L-glutamate + ADP + phosphate + 2 H(+). Allows the formation of correctly charged Asn-tRNA(Asn) or Gln-tRNA(Gln) through the transamidation of misacylated Asp-tRNA(Asn) or Glu-tRNA(Gln) in organisms which lack either or both of asparaginyl-tRNA or glutaminyl-tRNA synthetases. The reaction takes place in the presence of glutamine and ATP through an activated phospho-Asp-tRNA(Asn) or phospho-Glu-tRNA(Gln). The sequence is that of Aspartyl/glutamyl-tRNA(Asn/Gln) amidotransferase subunit C from Chloroherpeton thalassium (strain ATCC 35110 / GB-78).